The chain runs to 142 residues: Large ribosomal subunit protein bL17 (142 aa).

This sequence belongs to the bacterial ribosomal protein bL17 family. Part of the 50S ribosomal subunit. Contacts protein L32.

The polypeptide is Large ribosomal subunit protein bL17 (Protochlamydia amoebophila (strain UWE25)).